The chain runs to 698 residues: uncharacterized protein (698 aa).

The signal sequence occupies residues 1-17 (MKKRHLLSLLALGISTA). The N-palmitoyl cysteine moiety is linked to residue Cys-18. A lipid anchor (S-diacylglycerol cysteine) is attached at Cys-18.

The protein to E.coli YmcA.

The protein localises to the cell membrane. This is an uncharacterized protein from Escherichia coli (strain K12).